A 436-amino-acid polypeptide reads, in one-letter code: Na(+)/H(+) antiporter NhaA 1 (436 aa).

Helical transmembrane passes span 35 to 55, 80 to 100, 116 to 136, 147 to 167, 176 to 196, 201 to 221, 226 to 246, 283 to 303, 313 to 333, 354 to 374, and 385 to 405; these read FGGGLLLLGAVIALVWANSPW, LATWAADGLLAIFFFVVGLEL, ALPVIAAIGGMIVPALIYVGV, GWAIPTATDIAFALAVLAVIG, AFLLTLAVVDDLLAITVIAIF, FKLTPLLLALLPIALFGLLVQ, WWWALIPLAVVAWTLVHESGV, VSAGFAVPVFAFFAAGVSLRG, PIVVGIVAGLVLGKVLGIFGS, LLGVSLLAGIGFTVSLLIGEL, and VKAAVLTGSLIAALLASIVLI.

It belongs to the NhaA Na(+)/H(+) (TC 2.A.33) antiporter family.

It is found in the cell membrane. The catalysed reaction is Na(+)(in) + 2 H(+)(out) = Na(+)(out) + 2 H(+)(in). Functionally, na(+)/H(+) antiporter that extrudes sodium in exchange for external protons. This chain is Na(+)/H(+) antiporter NhaA 1, found in Salinispora tropica (strain ATCC BAA-916 / DSM 44818 / JCM 13857 / NBRC 105044 / CNB-440).